The sequence spans 738 residues: MTKFQEAVTFKDVAVAFTEEELGLLDSAQRKLYRDVMLENFRNLVSVGHQSFKPDMISQLEREEKLWMKELQTQRGKHSGDRNQNEMATLHKAGLRCFSLGELSCWQIKRHIASKLARSQDSMINIEGKSSQFPKHHDSPCQVGAGESIQASVDDNCLVNHIGDHSSIIENQEFPTGKVPNSWSKIYLNETQNYQRSCKQTQMKNKLCIFAPYVDIFSCISHHHDDNIVHKRDKVHSNSDCGKDTLKVSPLTQRSIHTGQKTYQGNECEEAFNDSSSLELHKQVHLGKKSPACSTHEKDTSYSSGIPVQQSVRTGKKRYWCHECGKGFSQSSNLQTHQRVHTGEKPYTCHECGKSFNQSSHLYAHLPIHTGEKPYRCDSCGKGFSRSTDLNIHCRVHTGEKPYKCEVCGKGFTQRSHLQAHERIHTGEKPYKCGDCGKRFSCSSNLHTHQRVHTEEKPYKCDECGKCFSLSFNLHSHQRVHTGEKPYKCEECGKGFSSASSFQSHQRVHTGEKPFRCNVCGKGFSQSSYFQAHQRVHTGEKPYKCEVCGKRFNWSLNLHNHQRVHTGEKPYKCEECGKGFSQASNLQAHQSVHTGEKPFKCDACQKRFSQASHLQAHQRVHTGEKPYKCDTCGKAFSQRSNLQVHQIIHTGEKPFKCEECGKEFSWSAGLSAHQRVHTGEKPYTCQQCGKGFSQASHFHTHQRVHTGERPYICDVCCKGFSQRSHLIYHQRVHTGGNL.

A KRAB domain is found at 8–79 (VTFKDVAVAF…ELQTQRGKHS (72 aa)). The C2H2-type 1; degenerate zinc finger occupies 263–285 (YQGNECEEAFNDSSSLELHKQVH). C2H2-type zinc fingers lie at residues 319-341 (YWCH…QRVH), 347-369 (YTCH…LPIH), 375-397 (YRCD…CRVH), 403-425 (YKCE…ERIH), 431-453 (YKCG…QRVH), 459-481 (YKCD…QRVH), 487-509 (YKCE…QRVH), 515-537 (FRCN…QRVH), 543-565 (YKCE…QRVH), 571-593 (YKCE…QSVH), 599-621 (FKCD…QRVH), 627-649 (YKCD…QIIH), 655-677 (FKCE…QRVH), 683-705 (YTCQ…QRVH), and 711-733 (YICD…QRVH).

This sequence belongs to the krueppel C2H2-type zinc-finger protein family.

It localises to the nucleus. In terms of biological role, may be involved in transcriptional regulation. This chain is Zinc finger protein 235 (ZNF235), found in Homo sapiens (Human).